A 305-amino-acid polypeptide reads, in one-letter code: Phosphoribosylaminoimidazole-succinocarboxamide synthase (305 aa).

This sequence belongs to the SAICAR synthetase family.

The catalysed reaction is 5-amino-1-(5-phospho-D-ribosyl)imidazole-4-carboxylate + L-aspartate + ATP = (2S)-2-[5-amino-1-(5-phospho-beta-D-ribosyl)imidazole-4-carboxamido]succinate + ADP + phosphate + 2 H(+). It participates in purine metabolism; IMP biosynthesis via de novo pathway; 5-amino-1-(5-phospho-D-ribosyl)imidazole-4-carboxamide from 5-amino-1-(5-phospho-D-ribosyl)imidazole-4-carboxylate: step 1/2. In Tropheryma whipplei (strain TW08/27) (Whipple's bacillus), this protein is Phosphoribosylaminoimidazole-succinocarboxamide synthase.